Consider the following 890-residue polypeptide: Protein translocase subunit SecA (890 aa).

Residues Gln-85, 103 to 107 (GEGKT), and Asp-491 contribute to the ATP site.

Belongs to the SecA family. Monomer and homodimer. Part of the essential Sec protein translocation apparatus which comprises SecA, SecYEG and auxiliary proteins SecDF. Other proteins may also be involved.

It is found in the cell membrane. The protein resides in the cytoplasm. It catalyses the reaction ATP + H2O + cellular proteinSide 1 = ADP + phosphate + cellular proteinSide 2.. In terms of biological role, part of the Sec protein translocase complex. Interacts with the SecYEG preprotein conducting channel. Has a central role in coupling the hydrolysis of ATP to the transfer of proteins into and across the cell membrane, serving as an ATP-driven molecular motor driving the stepwise translocation of polypeptide chains across the membrane. This Mycoplasmoides gallisepticum (strain R(low / passage 15 / clone 2)) (Mycoplasma gallisepticum) protein is Protein translocase subunit SecA.